Reading from the N-terminus, the 408-residue chain is CinA-like protein (408 aa).

The protein belongs to the CinA family.

The sequence is that of CinA-like protein from Thermotoga sp. (strain RQ2).